A 206-amino-acid chain; its full sequence is Ribosomal RNA large subunit methyltransferase E (206 aa).

5 residues coordinate S-adenosyl-L-methionine: Gly-60, Trp-62, Asp-80, Asp-96, and Asp-121. The Proton acceptor role is filled by Lys-161.

It belongs to the class I-like SAM-binding methyltransferase superfamily. RNA methyltransferase RlmE family.

It is found in the cytoplasm. The enzyme catalyses uridine(2552) in 23S rRNA + S-adenosyl-L-methionine = 2'-O-methyluridine(2552) in 23S rRNA + S-adenosyl-L-homocysteine + H(+). Functionally, specifically methylates the uridine in position 2552 of 23S rRNA at the 2'-O position of the ribose in the fully assembled 50S ribosomal subunit. The sequence is that of Ribosomal RNA large subunit methyltransferase E from Nitrosomonas europaea (strain ATCC 19718 / CIP 103999 / KCTC 2705 / NBRC 14298).